The sequence spans 446 residues: D(1A) dopamine receptor (446 aa).

At 1–22 the chain is on the extracellular side; the sequence is MAPNTSTMDEAGLPAERDFSFR. Asn-4 carries N-linked (GlcNAc...) asparagine glycosylation. The helical transmembrane segment at 23–48 threads the bilayer; it reads ILTACFLSLLILSTLLGNTLVCAAVI. Residues 49-59 lie on the Cytoplasmic side of the membrane; sequence RFRHLRSKVTN. The helical transmembrane segment at 60–86 threads the bilayer; it reads FFVISLAVSDLLVAVLVMPWKAVAEIA. At 87 to 95 the chain is on the extracellular side; it reads GFWPLGPFC. A disulfide bridge links Cys-95 with Cys-186. The chain crosses the membrane as a helical span at residues 96-118; that stretch reads NIWVAFDIMCSTASILNLCVISV. Topologically, residues 119–137 are cytoplasmic; it reads DRYWAISSPFQYERKMTPK. Residues 138-162 traverse the membrane as a helical segment; it reads AAFILISVAWTLSVLISFIPVQLSW. Topologically, residues 163 to 192 are extracellular; the sequence is HKAKPTWPLDGNFTSLEDTEDDNCDTRLSR. The helical transmembrane segment at 193 to 218 threads the bilayer; that stretch reads TYAISSSLISFYIPVAIMIVTYTSIY. Residues 219–272 lie on the Cytoplasmic side of the membrane; it reads RIAQKQIRRISALERAAVHAKNCQTTAGNGNPVECAQSESSFKMSFKRETKVLK. Residues 273–299 form a helical membrane-spanning segment; that stretch reads TLSVIMGVFVCCWLPFFISNCMVPFCG. The Extracellular portion of the chain corresponds to 300–312; sequence SEETQPFCIDSIT. A helical transmembrane segment spans residues 313–337; sequence FDVFVWFGWANSSLNPIIYAFNADF. The Cytoplasmic portion of the chain corresponds to 338-446; sequence QKAFSTLLGC…PVTHSGQHST (109 aa). 2 S-palmitoyl cysteine lipidation sites follow: Cys-347 and Cys-351.

The protein belongs to the G-protein coupled receptor 1 family. Interacts with DNAJC14 via its C-terminus PubMed:11331877. Interacts with DRD2. Interacts with DORIP1. In terms of processing, N-glycosylated. As to expression, brain, in the striatum, the nucleus accumbens, and the olfactory tubercle.

It is found in the cell membrane. The protein localises to the endoplasmic reticulum membrane. It localises to the cell projection. Its subcellular location is the dendrite. The protein resides in the cilium membrane. It is found in the dendritic spine. Dopamine receptor whose activity is mediated by G proteins which activate adenylyl cyclase. This Rattus norvegicus (Rat) protein is D(1A) dopamine receptor (Drd1).